The sequence spans 912 residues: Lateral signaling target protein 2 homolog (912 aa).

The span at 323–332 (NVNTSNNSDN) shows a compositional bias: low complexity. Disordered regions lie at residues 323–360 (NVNT…SSFY), 455–610 (ADSG…ESSQ), 664–745 (NSSP…ASSA), and 769–846 (GGGS…APPR). Residues 333 to 355 (SDSRVDDSPNDELRHESETRDNR) show a composition bias toward basic and acidic residues. Residues 455-468 (ADSGLGTANPSVDN) show a composition bias toward polar residues. The segment covering 486–505 (SSEEGEIDEYDNEEDDEDSD) has biased composition (acidic residues). Basic residues predominate over residues 530 to 544 (YRTHKQQHHHRHRRS). Composition is skewed to polar residues over residues 545-556 (SGSIMSATSSRK) and 572-590 (VPSN…DTSP). Residues 591-610 (SSGNQSECSSTSSTTGESSQ) show a composition bias toward low complexity. Positions 682 to 699 (DKPKEPDPTDLFEFRASE) are enriched in basic and acidic residues. Composition is skewed to polar residues over residues 705-717 (PGQN…QSIY), 735-745 (PGTSPIRASSA), 780-801 (ERSV…ATDS), and 822-834 (SRSS…NGTS). The segment at 850 to 910 (DGDAPRCMAC…VCRDCYVREV (61 aa)) adopts an FYVE-type zinc-finger fold. Zn(2+) contacts are provided by cysteine 856, cysteine 859, cysteine 872, cysteine 875, cysteine 880, cysteine 883, cysteine 902, and cysteine 905.

Belongs to the lst-2 family.

In terms of biological role, negative regulator of epidermal growth factor receptor (EGFR) signaling. This chain is Lateral signaling target protein 2 homolog, found in Aedes aegypti (Yellowfever mosquito).